The primary structure comprises 232 residues: MQKNAAHTYAISSLLVLSLTGCAWIPSTPLVQGATSAQPVPGPTPVANGSIFQSAQPINYGYQPLFEDRRPRNIGDTLTIVLQENVSASKSSSVNASRDGKTNFGFDTVPRYLQGLFGNARADVEASGGNTFNGKGGANASNTFSGTLTVTVDQVLVNGNLHVVGEKQIAINQGTEFIRFSGVVNPRTISGSNTVSSTQVVDARIEYVGNGYINEAQNMGWLQRFFLNLSPM.

The signal sequence occupies residues 1 to 21; sequence MQKNAAHTYAISSLLVLSLTG. Cysteine 22 carries N-palmitoyl cysteine lipidation. Cysteine 22 carries the S-diacylglycerol cysteine lipid modification.

The protein belongs to the FlgH family. The basal body constitutes a major portion of the flagellar organelle and consists of four rings (L,P,S, and M) mounted on a central rod.

The protein resides in the cell outer membrane. It localises to the bacterial flagellum basal body. In terms of biological role, assembles around the rod to form the L-ring and probably protects the motor/basal body from shearing forces during rotation. This is Flagellar L-ring protein from Shigella boydii serotype 18 (strain CDC 3083-94 / BS512).